The sequence spans 481 residues: Bifunctional protein HldE (481 aa).

The ribokinase stretch occupies residues 1-318 (MKVTLPDFRR…ENAIRGRAET (318 aa)). 195-198 (NLSE) is an ATP binding site. Residue Asp264 is part of the active site. The interval 344–481 (MTNGIFDILH…KRRAGQRTVV (138 aa)) is cytidylyltransferase.

This sequence in the N-terminal section; belongs to the carbohydrate kinase PfkB family. It in the C-terminal section; belongs to the cytidylyltransferase family. In terms of assembly, homodimer.

The enzyme catalyses D-glycero-beta-D-manno-heptose 7-phosphate + ATP = D-glycero-beta-D-manno-heptose 1,7-bisphosphate + ADP + H(+). It catalyses the reaction D-glycero-beta-D-manno-heptose 1-phosphate + ATP + H(+) = ADP-D-glycero-beta-D-manno-heptose + diphosphate. It participates in nucleotide-sugar biosynthesis; ADP-L-glycero-beta-D-manno-heptose biosynthesis; ADP-L-glycero-beta-D-manno-heptose from D-glycero-beta-D-manno-heptose 7-phosphate: step 1/4. It functions in the pathway nucleotide-sugar biosynthesis; ADP-L-glycero-beta-D-manno-heptose biosynthesis; ADP-L-glycero-beta-D-manno-heptose from D-glycero-beta-D-manno-heptose 7-phosphate: step 3/4. In terms of biological role, catalyzes the phosphorylation of D-glycero-D-manno-heptose 7-phosphate at the C-1 position to selectively form D-glycero-beta-D-manno-heptose-1,7-bisphosphate. Functionally, catalyzes the ADP transfer from ATP to D-glycero-beta-D-manno-heptose 1-phosphate, yielding ADP-D-glycero-beta-D-manno-heptose. This is Bifunctional protein HldE from Sodalis glossinidius (strain morsitans).